A 993-amino-acid chain; its full sequence is DNA double-strand break repair Rad50 ATPase (993 aa).

ATP is bound by residues Arg12, 32 to 38 (NGSGKSS), and Gln133. Coiled coils occupy residues 192 to 222 (LENL…LEKL) and 402 to 493 (EELK…LEKT). Positions 452–556 (ENELKEKYED…KLNEIDSFKL (105 aa)) constitute a Zinc-hook domain. Zn(2+) is bound by residues Cys497 and Cys500. 3 coiled-coil regions span residues 570-612 (KVEE…LEND), 646-677 (DSSK…EINL), and 702-731 (ETEK…VLKN).

This sequence belongs to the SMC family. RAD50 subfamily. In terms of assembly, homodimer. Forms a heterotetramer composed of two Mre11 subunits and two Rad50 subunits. Zn(2+) serves as cofactor.

Part of the Rad50/Mre11 complex, which is involved in the early steps of DNA double-strand break (DSB) repair. The complex may facilitate opening of the processed DNA ends to aid in the recruitment of HerA and NurA. Rad50 controls the balance between DNA end bridging and DNA resection via ATP-dependent structural rearrangements of the Rad50/Mre11 complex. The protein is DNA double-strand break repair Rad50 ATPase of Methanococcus maripaludis (strain DSM 14266 / JCM 13030 / NBRC 101832 / S2 / LL).